Here is a 108-residue protein sequence, read N- to C-terminus: Large ribosomal subunit protein uL24 (108 aa).

It belongs to the universal ribosomal protein uL24 family. In terms of assembly, part of the 50S ribosomal subunit.

One of two assembly initiator proteins, it binds directly to the 5'-end of the 23S rRNA, where it nucleates assembly of the 50S subunit. In terms of biological role, one of the proteins that surrounds the polypeptide exit tunnel on the outside of the subunit. In Geobacter sulfurreducens (strain ATCC 51573 / DSM 12127 / PCA), this protein is Large ribosomal subunit protein uL24.